The primary structure comprises 205 residues: Rho-related GTP-binding protein RhoQ (205 aa).

16-23 (GDGAVGKT) lines the GTP pocket. The short motif at 38–46 (YVPTVFDHY) is the Effector region element. GTP contacts are provided by residues 63-67 (DTAGQ) and 121-124 (TQID). Cys202 is modified (cysteine methyl ester). Residue Cys202 is the site of S-farnesyl cysteine attachment. Residues 203 to 205 (LIT) constitute a propeptide, removed in mature form.

This sequence belongs to the small GTPase superfamily. Rho family. Interacts with EXO70, CDC42EP1, CDC42EP2 and CDC42EP3 in a GTP-dependent manner. Interacts with CDC42EP4, PARD6A, PARD6G (and probably PARD6B) in a GTP-dependent manner. Part of a quaternary complex containing PARD3, some PARD6 protein (PARD6A, PARD6B or PARD6G) and some atypical PKC protein (PRKCI or PRKCZ). Interacts with GOPC. Interacts with ARHGAP33/TCGAP. Post-translationally, may be post-translationally modified by both palmitoylation and polyisoprenylation.

The protein localises to the cytoplasm. It is found in the cell membrane. Regulated by guanine nucleotide exchange factors (GEFs) which promote the exchange of bound GDP for free GTP, GTPase activating proteins (GAPs) which increase the GTP hydrolysis activity, and GDP dissociation inhibitors which inhibit the dissociation of the nucleotide from the GTPase. Its function is as follows. Plasma membrane-associated small GTPase which cycles between an active GTP-bound and an inactive GDP-bound state. In active state binds to a variety of effector proteins to regulate cellular responses. Involved in epithelial cell polarization processes. May play a role in CFTR trafficking to the plasma membrane. Causes the formation of thin, actin-rich surface projections called filopodia. The chain is Rho-related GTP-binding protein RhoQ (Rhoq) from Mus musculus (Mouse).